A 71-amino-acid chain; its full sequence is Putative antitoxin VapB14 (71 aa).

Its function is as follows. Putative antitoxin component of a possible type II toxin-antitoxin (TA) system. The cognate toxin is VapB14. This chain is Putative antitoxin VapB14 (vapB14), found in Mycobacterium tuberculosis (strain ATCC 25618 / H37Rv).